Here is a 364-residue protein sequence, read N- to C-terminus: Glycerophosphodiester phosphodiesterase (364 aa).

The signal sequence occupies residues 1–18 (MKLKTLALSLLAAGVLAG). A lipid anchor (N-palmitoyl cysteine) is attached at Cys19. Cys19 is lipidated: S-diacylglycerol cysteine. Residues 35 to 360 (KIIIAHRGAS…DFPDTGVEFL (326 aa)) form the GP-PDE domain. His40 (proton acceptor) is an active-site residue. Ca(2+) contacts are provided by Glu67 and Asp69. The active-site Proton donor is His82. Glu175 contributes to the Ca(2+) binding site.

Belongs to the glycerophosphoryl diester phosphodiesterase family. The cofactor is Ca(2+). Post-translationally, contains both ester- and amide-linked fatty acids.

It localises to the cell outer membrane. It catalyses the reaction a sn-glycero-3-phosphodiester + H2O = an alcohol + sn-glycerol 3-phosphate + H(+). Glycerophosphodiester phosphodiesterase hydrolyzes glycerophosphodiesters into glycerol-3-phosphate (G3P) and the corresponding alcohol. Has a specific affinity for human immunoglobulin D myeloma protein. The sequence is that of Glycerophosphodiester phosphodiesterase (glpQ) from Haemophilus influenzae (strain ATCC 51907 / DSM 11121 / KW20 / Rd).